A 249-amino-acid polypeptide reads, in one-letter code: Ubiquinone/menaquinone biosynthesis C-methyltransferase UbiE (249 aa).

S-adenosyl-L-methionine contacts are provided by residues Thr72, Asp93, and 121 to 122; that span reads DA.

The protein belongs to the class I-like SAM-binding methyltransferase superfamily. MenG/UbiE family.

It catalyses the reaction a 2-demethylmenaquinol + S-adenosyl-L-methionine = a menaquinol + S-adenosyl-L-homocysteine + H(+). The enzyme catalyses a 2-methoxy-6-(all-trans-polyprenyl)benzene-1,4-diol + S-adenosyl-L-methionine = a 5-methoxy-2-methyl-3-(all-trans-polyprenyl)benzene-1,4-diol + S-adenosyl-L-homocysteine + H(+). The protein operates within quinol/quinone metabolism; menaquinone biosynthesis; menaquinol from 1,4-dihydroxy-2-naphthoate: step 2/2. It functions in the pathway cofactor biosynthesis; ubiquinone biosynthesis. Methyltransferase required for the conversion of demethylmenaquinol (DMKH2) to menaquinol (MKH2) and the conversion of 2-polyprenyl-6-methoxy-1,4-benzoquinol (DDMQH2) to 2-polyprenyl-3-methyl-6-methoxy-1,4-benzoquinol (DMQH2). The sequence is that of Ubiquinone/menaquinone biosynthesis C-methyltransferase UbiE from Saccharophagus degradans (strain 2-40 / ATCC 43961 / DSM 17024).